Reading from the N-terminus, the 347-residue chain is Chaperone protein DnaJ 1 (347 aa).

The 71-residue stretch at 5–75 folds into the J domain; that stretch reads DPHSLLGLSP…PAAAPHDAQA (71 aa). The segment covering 68–77 has biased composition (low complexity); sequence AAPHDAQAAD. The disordered stretch occupies residues 68 to 91; the sequence is AAPHDAQAADARPEPPPEAPPRGA. The segment at 107–181 adopts a CR-type zinc-finger fold; the sequence is GGEKAFTIAD…CHGSGQARAA (75 aa). Residues cysteine 120, cysteine 123, cysteine 137, cysteine 140, cysteine 155, cysteine 158, cysteine 169, and cysteine 172 each coordinate Zn(2+). CXXCXGXG motif repeat units lie at residues 120-127, 137-144, 155-162, and 169-176; these read CGACGGSG, CATCHGSG, CADCAGRG, and CGACHGSG.

It belongs to the DnaJ family. As to quaternary structure, homodimer. Zn(2+) serves as cofactor.

It localises to the cytoplasm. Its function is as follows. Participates actively in the response to hyperosmotic and heat shock by preventing the aggregation of stress-denatured proteins and by disaggregating proteins, also in an autonomous, DnaK-independent fashion. Unfolded proteins bind initially to DnaJ; upon interaction with the DnaJ-bound protein, DnaK hydrolyzes its bound ATP, resulting in the formation of a stable complex. GrpE releases ADP from DnaK; ATP binding to DnaK triggers the release of the substrate protein, thus completing the reaction cycle. Several rounds of ATP-dependent interactions between DnaJ, DnaK and GrpE are required for fully efficient folding. Also involved, together with DnaK and GrpE, in the DNA replication of plasmids through activation of initiation proteins. The protein is Chaperone protein DnaJ 1 of Aromatoleum aromaticum (strain DSM 19018 / LMG 30748 / EbN1) (Azoarcus sp. (strain EbN1)).